The sequence spans 288 residues: Transmembrane and coiled-coil domain-containing protein 5A (288 aa).

Residues 13–105 (IISLNMDLER…VHSISELQRK (93 aa)) are a coiled coil. Residues 227–249 (SLLFSTLFFIRLLGYLIFHLSFI) traverse the membrane as a helical segment.

Testis-specific. Expressed in spermatogenic cells of testis but disappear by the time mature spermatozoa are formed (at protein level).

Its subcellular location is the endoplasmic reticulum membrane. The protein resides in the nucleus membrane. This Rattus norvegicus (Rat) protein is Transmembrane and coiled-coil domain-containing protein 5A (Tmco5a).